Reading from the N-terminus, the 182-residue chain is Dephospho-CoA kinase (182 aa).

In terms of domain architecture, DPCK spans 4–182 (VVAITGGIGS…IINNDHKIMT (179 aa)). 12-17 (GSGKTT) contributes to the ATP binding site.

It belongs to the CoaE family.

Its subcellular location is the cytoplasm. It carries out the reaction 3'-dephospho-CoA + ATP = ADP + CoA + H(+). It participates in cofactor biosynthesis; coenzyme A biosynthesis; CoA from (R)-pantothenate: step 5/5. Its function is as follows. Catalyzes the phosphorylation of the 3'-hydroxyl group of dephosphocoenzyme A to form coenzyme A. The chain is Dephospho-CoA kinase from Aliivibrio fischeri (strain ATCC 700601 / ES114) (Vibrio fischeri).